The following is a 378-amino-acid chain: Anhydro-N-acetylmuramic acid kinase (378 aa).

22–29 (GTSLDGAD) contacts ATP.

This sequence belongs to the anhydro-N-acetylmuramic acid kinase family.

The catalysed reaction is 1,6-anhydro-N-acetyl-beta-muramate + ATP + H2O = N-acetyl-D-muramate 6-phosphate + ADP + H(+). It functions in the pathway amino-sugar metabolism; 1,6-anhydro-N-acetylmuramate degradation. Its pathway is cell wall biogenesis; peptidoglycan recycling. Its function is as follows. Catalyzes the specific phosphorylation of 1,6-anhydro-N-acetylmuramic acid (anhMurNAc) with the simultaneous cleavage of the 1,6-anhydro ring, generating MurNAc-6-P. Is required for the utilization of anhMurNAc either imported from the medium or derived from its own cell wall murein, and thus plays a role in cell wall recycling. This chain is Anhydro-N-acetylmuramic acid kinase, found in Bordetella petrii (strain ATCC BAA-461 / DSM 12804 / CCUG 43448).